Reading from the N-terminus, the 25-residue chain is Secapin-1 (25 aa).

A disulfide bond links Cys-9 and Cys-20.

Expressed by the venom gland.

The protein localises to the secreted. Serine protease inhibitor which exhibits antifibrinolytic, antielastolytic and antimicrobial activities. Displays antimicrobial activity against bacteria and fungi. Likely functions in the innate immune response to microbial infection and possibly in the venom, as an antifibrinolytic agent. The chain is Secapin-1 from Apis mellifera (Honeybee).